The primary structure comprises 212 residues: 3-demethoxyubiquinol 3-hydroxylase (212 aa).

Residues 1–14 (MTSPSSRTPRGSTP) show a composition bias toward low complexity. The interval 1–22 (MTSPSSRTPRGSTPPFEPSADE) is disordered. Fe cation-binding residues include Glu58, Glu89, His92, Glu141, Glu173, and His176.

The protein belongs to the COQ7 family. Requires Fe cation as cofactor.

It is found in the cell membrane. It catalyses the reaction a 5-methoxy-2-methyl-3-(all-trans-polyprenyl)benzene-1,4-diol + AH2 + O2 = a 3-demethylubiquinol + A + H2O. It participates in cofactor biosynthesis; ubiquinone biosynthesis. In terms of biological role, catalyzes the hydroxylation of 2-nonaprenyl-3-methyl-6-methoxy-1,4-benzoquinol during ubiquinone biosynthesis. The polypeptide is 3-demethoxyubiquinol 3-hydroxylase (Rhodospirillum rubrum (strain ATCC 11170 / ATH 1.1.1 / DSM 467 / LMG 4362 / NCIMB 8255 / S1)).